Reading from the N-terminus, the 1495-residue chain is Ras GTPase-activating-like protein IQG1 (1495 aa).

A Calponin-homology (CH) domain is found at 108–221 (LCRVSEVKIW…ILISMINKKW (114 aa)). Thr264 carries the post-translational modification Phosphothreonine. Ser268 carries the post-translational modification Phosphoserine. Thr299 bears the Phosphothreonine mark. IQ domains lie at 447-467 (EQDI…VLSS), 538-567 (SHYP…KLND), 568-597 (ERES…AVHD), 599-628 (HKEN…SLGK), 629-658 (ENCN…PENN), 687-716 (EYNN…FYKR), and 717-746 (NVRS…CPNP). Positions 759 to 798 (NGTATIEEVQNQLESCQASLDSENMKKERLLKSIRQQLNI) form a coiled coil. Positions 876–1100 (SYFTRFVCEM…PHIKDVLYNV (225 aa)) constitute a Ras-GAP domain.

Interacts with AFR1. Interacts with AKR1. Interacts with activated CDC42. Interacts with calmodulin CMD1. Interacts with myosin MYO1 and its light chain MLC1. Interacts with BUD4. Interacts with INN1. Interacts with SEC3. Interacts with TEM1.

The protein localises to the bud neck. Its function is as follows. Required for the assembly and the contraction of the actomyosin ring at the bud neck during cytokinesis. Seems to be involved in additional tasks during cell division like axial bud-site selection and targeted secretion by recruiting the spatial landmark BUD4, the septin CDC12 and the secretion landmark SEC3 to the bud neck. May be regulated by calcium ions. This chain is Ras GTPase-activating-like protein IQG1 (IQG1), found in Saccharomyces cerevisiae (strain ATCC 204508 / S288c) (Baker's yeast).